Reading from the N-terminus, the 312-residue chain is Pre-mRNA-splicing factor 38A (312 aa).

Positions 1–179 (MANRTVKDAH…VLEETEQLDP (179 aa)) are N-terminal protein interaction domain. Residues 180 to 312 (RVSALEEDMD…SHKKSRRGNE (133 aa)) form a disordered region. Residues 184–201 (LEEDMDDVESSEEEEDDD) are compositionally biased toward acidic residues. Residues 202-223 (EKGRDPSPEHHRRNYRDLDRPR) are compositionally biased toward basic and acidic residues. 2 stretches are compositionally biased toward basic residues: residues 224–294 (RSPS…RSHS) and 301–312 (KKSHKKSRRGNE).

Belongs to the PRP38 family. In terms of assembly, component of the spliceosome B complex.

Its subcellular location is the nucleus. Its function is as follows. Involved in pre-mRNA splicing as a component of the spliceosome. The polypeptide is Pre-mRNA-splicing factor 38A (prpf38a) (Xenopus laevis (African clawed frog)).